We begin with the raw amino-acid sequence, 231 residues long: Response regulator Rre1 (231 aa).

A Response regulatory domain is found at 6–123 (SLLLVDDEPG…ELEAIVRNLL (118 aa)). A 4-aspartylphosphate modification is found at Asp-56. One can recognise an HTH luxR-type domain in the interval 163–228 (PSPIKLDFTP…ELVRFALQHG (66 aa)). Positions 187–206 (NKEIAAQLKTSVRNVEKYVS) form a DNA-binding region, H-T-H motif.

Interacts with histidine kinase Hik2; may accept phosphate from Hik2.

In terms of biological role, member of at least 2 two-component regulatory systems Hik2/Rre1 and Hik34/Rre1. Responds to hyperosmotic stress, regulates expression of at least 24 genes including dnaK2 and hspA with Hik34 and sigB (sll0306), sll0528, slr1119, slr0852 and ssr3188 with Hik2. Responds to salt stress, regulates expression of at least 24 genes including adhA, dnaK2 and hspA with Hik34. Binds the adhA promoter. Phosphorylated by Hik2 in vitro. Phosphorylated protein has 10-fold higher affinity for DNA than unphosphorylated protein. This is Response regulator Rre1 from Synechocystis sp. (strain ATCC 27184 / PCC 6803 / Kazusa).